Here is a 141-residue protein sequence, read N- to C-terminus: Neuropeptides CP2 (141 aa).

The signal sequence occupies residues 1 to 26; it reads MDSRICTSFARLMASALCVSTLLVTA. The segment at 75–94 is disordered; the sequence is KVDMPLPRQRTSSRSSERWA. Position 140 is a histidine amide (H140).

Neurons.

The protein localises to the secreted. Mediates intrinsic neuromodulation. The chain is Neuropeptides CP2 (CP2PP) from Aplysia californica (California sea hare).